We begin with the raw amino-acid sequence, 279 residues long: Large ribosomal subunit protein uL2 (279 aa).

Residues 223–279 (TVRGSAMNPNDHPHGGGEGRSPVGMDAPRTPWGKRHMGVKTRNNKKSSTSMIVRRRK) form a disordered region. The segment covering 254–267 (WGKRHMGVKTRNNK) has biased composition (basic residues).

Belongs to the universal ribosomal protein uL2 family. As to quaternary structure, part of the 50S ribosomal subunit. Forms a bridge to the 30S subunit in the 70S ribosome.

Functionally, one of the primary rRNA binding proteins. Required for association of the 30S and 50S subunits to form the 70S ribosome, for tRNA binding and peptide bond formation. It has been suggested to have peptidyltransferase activity; this is somewhat controversial. Makes several contacts with the 16S rRNA in the 70S ribosome. This is Large ribosomal subunit protein uL2 from Ureaplasma urealyticum serovar 10 (strain ATCC 33699 / Western).